A 178-amino-acid chain; its full sequence is MAKKSTPVDSGRSKGKKASAPRGGGPAVIATNRKARHDYHILDTYECGVVLVGTEVKALREGKASLVDAYATIDAGEVWLRGLHIPEYSRGNFWNHTPRRVRKLLLHRREIDSLTGKVRDGNHTLVPLQLYFVDGRLKCELALARGKQDYDKRQDIKRRTEEREVVRELGRKIKGMKG.

Residues 1 to 28 are disordered; that stretch reads MAKKSTPVDSGRSKGKKASAPRGGGPAV.

Belongs to the SmpB family.

The protein localises to the cytoplasm. Required for rescue of stalled ribosomes mediated by trans-translation. Binds to transfer-messenger RNA (tmRNA), required for stable association of tmRNA with ribosomes. tmRNA and SmpB together mimic tRNA shape, replacing the anticodon stem-loop with SmpB. tmRNA is encoded by the ssrA gene; the 2 termini fold to resemble tRNA(Ala) and it encodes a 'tag peptide', a short internal open reading frame. During trans-translation Ala-aminoacylated tmRNA acts like a tRNA, entering the A-site of stalled ribosomes, displacing the stalled mRNA. The ribosome then switches to translate the ORF on the tmRNA; the nascent peptide is terminated with the 'tag peptide' encoded by the tmRNA and targeted for degradation. The ribosome is freed to recommence translation, which seems to be the essential function of trans-translation. The chain is SsrA-binding protein from Corynebacterium urealyticum (strain ATCC 43042 / DSM 7109).